Here is a 210-residue protein sequence, read N- to C-terminus: Large ribosomal subunit protein uL4 (210 aa).

In terms of assembly, part of the 50S ribosomal subunit. The N-terminus is blocked.

Its function is as follows. One of the primary rRNA binding proteins, this protein initially binds near the 5'-end of the 23S rRNA. It is important during the early stages of 50S assembly. It makes multiple contacts with different domains of the 23S rRNA in the assembled 50S subunit and ribosome. Functionally, forms part of the polypeptide exit tunnel. In terms of biological role, this protein can be incorporated into E.coli ribosomes in vivo, which resulted in decreased peptidyltransferase (Ptase) activity of the hybrid ribosomes. The hybrid 50S subunits associate less well with 30S subunits to form the ribosome. The chain is Large ribosomal subunit protein uL4 (rplD) from Thermus thermophilus (strain ATCC 27634 / DSM 579 / HB8).